The following is a 352-amino-acid chain: MAAAPDRAKALEAALAQIDKQFGKGSVMRLGDEVRAPIEVIPTGSIALDVALGIGGLPRGRVIEIYGPESSGKTTVALHAVANAQRAGGIAAFIDAEHALDPDYAAKLGVDTDALLVSQPDTGEQALEIMDMLVGSGSLDIVVIDSVAALVPRAEIEGDMGDSHVGLQARLMSQALRKITGRLSQTKTTAIFINQLREKIGVFFGSPETTTGGKALKFYASVRIDVRRIQTLKEGADSVGNRTKAKIVKNKMAPPFKIAEFDIIYGQGISREGGIIDMGVEHGIIKKSGSWFTYDGDQLGQGMENSRRFLRDNPELAAELERLIKEKLGVGVKPADAESKEDSPKLKAVDGF.

Position 67–74 (67–74 (GPESSGKT)) interacts with ATP. A disordered region spans residues 332 to 352 (VKPADAESKEDSPKLKAVDGF). Basic and acidic residues predominate over residues 335–352 (ADAESKEDSPKLKAVDGF).

Belongs to the RecA family.

The protein localises to the cytoplasm. Functionally, can catalyze the hydrolysis of ATP in the presence of single-stranded DNA, the ATP-dependent uptake of single-stranded DNA by duplex DNA, and the ATP-dependent hybridization of homologous single-stranded DNAs. It interacts with LexA causing its activation and leading to its autocatalytic cleavage. This Pseudarthrobacter chlorophenolicus (strain ATCC 700700 / DSM 12829 / CIP 107037 / JCM 12360 / KCTC 9906 / NCIMB 13794 / A6) (Arthrobacter chlorophenolicus) protein is Protein RecA.